A 116-amino-acid polypeptide reads, in one-letter code: Large ribosomal subunit protein bL17 (116 aa).

The protein belongs to the bacterial ribosomal protein bL17 family. In terms of assembly, part of the 50S ribosomal subunit. Contacts protein L32.

This is Large ribosomal subunit protein bL17 from Sulfurovum sp. (strain NBC37-1).